The primary structure comprises 517 residues: Serine hydroxymethyltransferase 2, mitochondrial (517 aa).

A mitochondrion-targeting transit peptide spans 1–31 (MAMASALRRLSSSSNKPLQRLFNGGHLYSMS). Residue lysine 287 is modified to N6-(pyridoxal phosphate)lysine.

This sequence belongs to the SHMT family. In terms of assembly, homotetramer. Pyridoxal 5'-phosphate serves as cofactor.

Its subcellular location is the mitochondrion. The enzyme catalyses (6R)-5,10-methylene-5,6,7,8-tetrahydrofolate + glycine + H2O = (6S)-5,6,7,8-tetrahydrofolate + L-serine. The protein operates within one-carbon metabolism; tetrahydrofolate interconversion. In terms of biological role, catalyzes the interconversion of serine and glycine. The chain is Serine hydroxymethyltransferase 2, mitochondrial from Flaveria pringlei.